A 160-amino-acid polypeptide reads, in one-letter code: Sodium/proline symporter (160 aa).

2 consecutive transmembrane segments (helical) span residues 6–26 (PMLVTFIVYIFGMVLIGFIAW) and 68–88 (IFISGISESWIAIGLTLGAWI).

Belongs to the sodium:solute symporter (SSF) (TC 2.A.21) family.

The protein localises to the cell inner membrane. It catalyses the reaction L-proline(in) + Na(+)(in) = L-proline(out) + Na(+)(out). Its function is as follows. Catalyzes the sodium-dependent uptake of extracellular L-proline. This is Sodium/proline symporter from Klebsiella oxytoca.